A 320-amino-acid chain; its full sequence is MQTRNTFSWIREEITRSISVSLMIYIITWASISSAYPIFAQQNYENPREATGRIVCANCHLANKPVDIEVPQTVLPDTVFEAVVKIPYDMQLKQVLANGKKGALNVGAVLILPEGFELAPPDRISPEMKEKIGNLSFQNYRPDKKNILVIGPVPGQKYSEITFPILAPDPATNKDVHFLKYPIYVGGNRGRGQIYPDGSKSNNTVYNATAGGIISKILRKEKGGYEITIVDASNERQVIDIIPRGLELLVSEGESIKLDQPLTSNPNVGGFGQGDAEIVLQDPLRVQGLLFFLGSVVLAQIFLVLKKKQFEKVQLSEMNF.

The N-terminal stretch at 1–35 (MQTRNTFSWIREEITRSISVSLMIYIITWASISSA) is a signal peptide. The heme site is built by Tyr-36, Cys-56, Cys-59, and His-60. A helical membrane pass occupies residues 286-306 (VQGLLFFLGSVVLAQIFLVLK).

It belongs to the cytochrome f family. In terms of assembly, the 4 large subunits of the cytochrome b6-f complex are cytochrome b6, subunit IV (17 kDa polypeptide, petD), cytochrome f and the Rieske protein, while the 4 small subunits are PetG, PetL, PetM and PetN. The complex functions as a dimer. It depends on heme as a cofactor.

Its subcellular location is the plastid. It localises to the chloroplast thylakoid membrane. Functionally, component of the cytochrome b6-f complex, which mediates electron transfer between photosystem II (PSII) and photosystem I (PSI), cyclic electron flow around PSI, and state transitions. In Nasturtium officinale (Watercress), this protein is Cytochrome f.